The following is a 559-amino-acid chain: Glutamine--tRNA ligase (559 aa).

The 'HIGH' region motif lies at 36–46 (PEPNGYLHLGH). ATP contacts are provided by residues 37-39 (EPN) and 43-49 (HLGHAKS). Positions 69 and 214 each coordinate L-glutamine. ATP-binding positions include Thr233, 263-264 (RL), and 271-273 (LSK). The short motif at 270–274 (LLSKR) is the 'KMSKS' region element.

This sequence belongs to the class-I aminoacyl-tRNA synthetase family. As to quaternary structure, monomer.

It is found in the cytoplasm. It carries out the reaction tRNA(Gln) + L-glutamine + ATP = L-glutaminyl-tRNA(Gln) + AMP + diphosphate. This chain is Glutamine--tRNA ligase, found in Nitrobacter winogradskyi (strain ATCC 25391 / DSM 10237 / CIP 104748 / NCIMB 11846 / Nb-255).